Here is a 331-residue protein sequence, read N- to C-terminus: Oxygen-evolving enhancer protein 1-2, chloroplastic (331 aa).

The N-terminal 57 residues, 1–57, are a transit peptide targeting the chloroplast; sequence MATSLQAAATFLQPAKIAASPSRNVHLRSNQTVGKSFGLDSSQARLTCSLHSDLKDF. A thylakoid-targeting transit peptide spans 58 to 84; it reads AGKCSDAAKIAGFALATSALVVSGAGA.

It belongs to the PsbO family.

It localises to the plastid. Its subcellular location is the chloroplast thylakoid membrane. Functionally, stabilizes the manganese cluster which is the primary site of water splitting. Regulates dephosphorylation and turnover of the PSII reaction center D1 protein. This Arabidopsis thaliana (Mouse-ear cress) protein is Oxygen-evolving enhancer protein 1-2, chloroplastic (PSBO2).